The primary structure comprises 279 residues: Undecaprenyl-diphosphatase (279 aa).

The next 8 helical transmembrane spans lie at 2 to 22 (LIIELLKAIFFGIIEGITEWL), 44 to 64 (AFIEMFNIVIQLGAIIAVMLI), 85 to 105 (WQLWLKVVIACIPSILIAVPL), 113 to 133 (FYFMVPIAIALIVYGIAFIWI), 163 to 183 (VLSIVPGTSRSGATILGAIIL), 188 to 208 (TVAADFTFFLAIPTMFGYSGL), 223 to 243 (AQVLILLVASLTAFVVSLLAI), and 255 to 275 (FTIFGKYRIVLGSLLLIYSFF).

This sequence belongs to the UppP family.

It localises to the cell membrane. It carries out the reaction di-trans,octa-cis-undecaprenyl diphosphate + H2O = di-trans,octa-cis-undecaprenyl phosphate + phosphate + H(+). Catalyzes the dephosphorylation of undecaprenyl diphosphate (UPP). Confers resistance to bacitracin. The sequence is that of Undecaprenyl-diphosphatase from Streptococcus pyogenes serotype M2 (strain MGAS10270).